Consider the following 373-residue polypeptide: CXADR-like membrane protein (373 aa).

A signal peptide spans 1 to 17 (MSLFFLWLVSYYVGTLG). Ig-like C2-type domains follow at residues 18–126 (THTE…VILK) and 134–223 (PKCE…VRVT). Residues 18 to 234 (THTEIKRVAE…QYVQSIGMVA (217 aa)) are Extracellular-facing. 2 disulfides stabilise this stretch: C34-C110 and C152-C207. N-linked (GlcNAc...) asparagine glycans are attached at residues N73 and N196. A helical membrane pass occupies residues 235–255 (GAVTGIVAGALLIFLLIWLLI). Topologically, residues 256 to 373 (RRKSKDRYEE…PSQSKAFQTV (118 aa)) are cytoplasmic. The span at 263-280 (YEEEDRPNEIREDAEAPR) shows a compositional bias: basic and acidic residues. Residues 263–373 (YEEEDRPNEI…PSQSKAFQTV (111 aa)) form a disordered region. Low complexity-rich tracts occupy residues 287 to 313 (SSSSSGSRSSRSGSSSTRSTGNSASRS), 321 to 332 (AAPQQPGLAPQA), and 353 to 363 (LTKAETTLSTT). Residues 364 to 373 (PSQSKAFQTV) show a composition bias toward polar residues.

In terms of tissue distribution, predominantly expressed in epithelial cells within different tissues and in the white adipose tissue. Expressed at high levels in the heart and brain, at intermediate levels in the lung, skeletal muscle, kidney and testis and at low levels in the liver and spleen.

It localises to the cell junction. The protein resides in the tight junction. Its subcellular location is the cell membrane. Its function is as follows. May be involved in the cell-cell adhesion. May play a role in adipocyte differentiation and development of obesity. Is required for normal small intestine development. In Mus musculus (Mouse), this protein is CXADR-like membrane protein (Clmp).